Reading from the N-terminus, the 212-residue chain is Cytidylate kinase (212 aa).

7 to 15 (GPAASGKGT) contributes to the ATP binding site.

This sequence belongs to the cytidylate kinase family. Type 1 subfamily.

Its subcellular location is the cytoplasm. It catalyses the reaction CMP + ATP = CDP + ADP. The catalysed reaction is dCMP + ATP = dCDP + ADP. This Rhodopseudomonas palustris (strain ATCC BAA-98 / CGA009) protein is Cytidylate kinase.